A 115-amino-acid chain; its full sequence is Ribosome-binding factor A (115 aa).

The protein belongs to the RbfA family. Monomer. Binds 30S ribosomal subunits, but not 50S ribosomal subunits or 70S ribosomes.

It localises to the cytoplasm. One of several proteins that assist in the late maturation steps of the functional core of the 30S ribosomal subunit. Associates with free 30S ribosomal subunits (but not with 30S subunits that are part of 70S ribosomes or polysomes). Required for efficient processing of 16S rRNA. May interact with the 5'-terminal helix region of 16S rRNA. This is Ribosome-binding factor A from Staphylococcus carnosus (strain TM300).